Reading from the N-terminus, the 340-residue chain is Glycerol-3-phosphate dehydrogenase [NAD(P)+] (340 aa).

3 residues coordinate NADPH: W11, R33, and K110. Residues K110, G144, and S146 each coordinate sn-glycerol 3-phosphate. Position 148 (A148) interacts with NADPH. Residues K199, D252, S262, R263, and N264 each contribute to the sn-glycerol 3-phosphate site. K199 functions as the Proton acceptor in the catalytic mechanism. R263 provides a ligand contact to NADPH. Residues V287 and E289 each contribute to the NADPH site.

This sequence belongs to the NAD-dependent glycerol-3-phosphate dehydrogenase family.

It localises to the cytoplasm. It catalyses the reaction sn-glycerol 3-phosphate + NAD(+) = dihydroxyacetone phosphate + NADH + H(+). The catalysed reaction is sn-glycerol 3-phosphate + NADP(+) = dihydroxyacetone phosphate + NADPH + H(+). The protein operates within membrane lipid metabolism; glycerophospholipid metabolism. Catalyzes the reduction of the glycolytic intermediate dihydroxyacetone phosphate (DHAP) to sn-glycerol 3-phosphate (G3P), the key precursor for phospholipid synthesis. The chain is Glycerol-3-phosphate dehydrogenase [NAD(P)+] from Polynucleobacter necessarius subsp. necessarius (strain STIR1).